The chain runs to 511 residues: 2,3-bisphosphoglycerate-independent phosphoglycerate mutase (511 aa).

Mn(2+) is bound by residues Asp14 and Ser64. The active-site Phosphoserine intermediate is Ser64. Residues His125, 155–156, Arg187, Arg193, 259–262, and Lys333 contribute to the substrate site; these read RD and RADR. The Mn(2+) site is built by Asp400, His404, Asp441, His442, and His460.

It belongs to the BPG-independent phosphoglycerate mutase family. As to quaternary structure, monomer. Mn(2+) serves as cofactor.

It catalyses the reaction (2R)-2-phosphoglycerate = (2R)-3-phosphoglycerate. It participates in carbohydrate degradation; glycolysis; pyruvate from D-glyceraldehyde 3-phosphate: step 3/5. Functionally, catalyzes the interconversion of 2-phosphoglycerate and 3-phosphoglycerate. This chain is 2,3-bisphosphoglycerate-independent phosphoglycerate mutase, found in Idiomarina loihiensis (strain ATCC BAA-735 / DSM 15497 / L2-TR).